Reading from the N-terminus, the 375-residue chain is tRNA-specific 2-thiouridylase MnmA (375 aa).

Residues Gly8–Ser15 and Met34 each bind ATP. The segment at Asn104–Asp106 is interaction with target base in tRNA. Cys109 acts as the Nucleophile in catalysis. Cys109 and Cys208 are disulfide-bonded. Gly134 provides a ligand contact to ATP. The interval Lys158–Gln160 is interaction with tRNA. The active-site Cysteine persulfide intermediate is the Cys208. Positions Arg321–Tyr322 are interaction with tRNA.

It belongs to the MnmA/TRMU family.

It localises to the cytoplasm. The catalysed reaction is S-sulfanyl-L-cysteinyl-[protein] + uridine(34) in tRNA + AH2 + ATP = 2-thiouridine(34) in tRNA + L-cysteinyl-[protein] + A + AMP + diphosphate + H(+). Functionally, catalyzes the 2-thiolation of uridine at the wobble position (U34) of tRNA, leading to the formation of s(2)U34. This chain is tRNA-specific 2-thiouridylase MnmA, found in Mycoplasma mycoides subsp. mycoides SC (strain CCUG 32753 / NCTC 10114 / PG1).